Consider the following 212-residue polypeptide: ATP-dependent Clp protease proteolytic subunit (212 aa).

The Nucleophile role is filled by Ser106. His131 is an active-site residue.

Belongs to the peptidase S14 family. As to quaternary structure, fourteen ClpP subunits assemble into 2 heptameric rings which stack back to back to give a disk-like structure with a central cavity, resembling the structure of eukaryotic proteasomes.

The protein resides in the cytoplasm. It carries out the reaction Hydrolysis of proteins to small peptides in the presence of ATP and magnesium. alpha-casein is the usual test substrate. In the absence of ATP, only oligopeptides shorter than five residues are hydrolyzed (such as succinyl-Leu-Tyr-|-NHMec, and Leu-Tyr-Leu-|-Tyr-Trp, in which cleavage of the -Tyr-|-Leu- and -Tyr-|-Trp bonds also occurs).. Cleaves peptides in various proteins in a process that requires ATP hydrolysis. Has a chymotrypsin-like activity. Plays a major role in the degradation of misfolded proteins. This is ATP-dependent Clp protease proteolytic subunit from Rhodopseudomonas palustris (strain HaA2).